A 621-amino-acid chain; its full sequence is tRNA uridine 5-carboxymethylaminomethyl modification enzyme MnmG (621 aa).

8–13 (GAGHAG) provides a ligand contact to FAD. Positions 199-227 (PRIDRRSVDYSRVEEQKGDENPPPFSFST) are disordered. The segment covering 200 to 218 (RIDRRSVDYSRVEEQKGDE) has biased composition (basic and acidic residues). Residue 269-283 (GPRYCPSIEDKIFRF) coordinates NAD(+).

This sequence belongs to the MnmG family. In terms of assembly, homodimer. Heterotetramer of two MnmE and two MnmG subunits. FAD serves as cofactor.

It localises to the cytoplasm. NAD-binding protein involved in the addition of a carboxymethylaminomethyl (cmnm) group at the wobble position (U34) of certain tRNAs, forming tRNA-cmnm(5)s(2)U34. In Chlorobium luteolum (strain DSM 273 / BCRC 81028 / 2530) (Pelodictyon luteolum), this protein is tRNA uridine 5-carboxymethylaminomethyl modification enzyme MnmG.